A 249-amino-acid polypeptide reads, in one-letter code: Triosephosphate isomerase (249 aa).

Residue 8–10 (NWK) participates in substrate binding. Residue His95 is the Electrophile of the active site. Catalysis depends on Glu166, which acts as the Proton acceptor. Substrate is bound by residues Gly172, Ser211, and 232-233 (GG).

Belongs to the triosephosphate isomerase family. Homodimer.

Its subcellular location is the cytoplasm. The catalysed reaction is D-glyceraldehyde 3-phosphate = dihydroxyacetone phosphate. Its pathway is carbohydrate biosynthesis; gluconeogenesis. It participates in carbohydrate degradation; glycolysis; D-glyceraldehyde 3-phosphate from glycerone phosphate: step 1/1. Involved in the gluconeogenesis. Catalyzes stereospecifically the conversion of dihydroxyacetone phosphate (DHAP) to D-glyceraldehyde-3-phosphate (G3P). The sequence is that of Triosephosphate isomerase from Granulibacter bethesdensis (strain ATCC BAA-1260 / CGDNIH1).